Reading from the N-terminus, the 396-residue chain is Chalcone synthase B (396 aa).

Cys-170 is an active-site residue.

This sequence belongs to the thiolase-like superfamily. Chalcone/stilbene synthases family.

It catalyses the reaction (E)-4-coumaroyl-CoA + 3 malonyl-CoA + 3 H(+) = 2',4,4',6'-tetrahydroxychalcone + 3 CO2 + 4 CoA. It participates in secondary metabolite biosynthesis; flavonoid biosynthesis. In terms of biological role, the primary product of this enzyme is 4,2',4',6'-tetrahydroxychalcone (also termed naringenin-chalcone or chalcone) which can under specific conditions spontaneously isomerize into naringenin. The sequence is that of Chalcone synthase B (CHSB) from Ipomoea purpurea (Common morning glory).